We begin with the raw amino-acid sequence, 344 residues long: tRNA(Ile)-lysidine synthase (344 aa).

Residue 30-35 (SGGQDS) participates in ATP binding. The segment at 323-344 (PPPPAPVPPDPGERSPPPSPLY) is disordered.

Belongs to the tRNA(Ile)-lysidine synthase family.

It localises to the cytoplasm. The catalysed reaction is cytidine(34) in tRNA(Ile2) + L-lysine + ATP = lysidine(34) in tRNA(Ile2) + AMP + diphosphate + H(+). Its function is as follows. Ligates lysine onto the cytidine present at position 34 of the AUA codon-specific tRNA(Ile) that contains the anticodon CAU, in an ATP-dependent manner. Cytidine is converted to lysidine, thus changing the amino acid specificity of the tRNA from methionine to isoleucine. In Thermosynechococcus vestitus (strain NIES-2133 / IAM M-273 / BP-1), this protein is tRNA(Ile)-lysidine synthase.